A 460-amino-acid chain; its full sequence is DEAD-box helicase Dbp80 (460 aa).

The residue at position 26 (S26) is a Phosphoserine. A Phosphothreonine modification is found at T30. The short motif at 73–101 (KTFEALHLKASLLKGIYAMGFNTPSKIQE) is the Q motif element. Positions 106–276 (TLLADPPQNM…RLIVADPTII (171 aa)) constitute a Helicase ATP-binding domain. 119 to 126 (SQSGTGKT) contributes to the ATP binding site. A DEAD box motif is present at residues 223–226 (DEAD). Residues 287-455 (NIKQYYVKCK…VLNTDSADDI (169 aa)) form the Helicase C-terminal domain.

The protein belongs to the DEAD box helicase family. DDX19/DBP5 subfamily.

It is found in the cytoplasm. It localises to the nucleus. The protein localises to the nucleoplasm. The catalysed reaction is ATP + H2O = ADP + phosphate + H(+). Functionally, ATP-dependent RNA helicase involved in mRNA export from the nucleus. This Drosophila melanogaster (Fruit fly) protein is DEAD-box helicase Dbp80 (Dbp80).